The primary structure comprises 228 residues: ATP synthase subunit a (228 aa).

A run of 6 helical transmembrane segments spans residues 19–39 (AIYI…AVAV), 81–101 (LIAT…IPGF), 107–127 (SLNL…FEGI), 136–156 (FAGF…IEVI), 178–198 (LFLL…PYAL), and 204–224 (ILQA…AVVV).

Belongs to the ATPase A chain family. F-type ATPases have 2 components, CF(1) - the catalytic core - and CF(0) - the membrane proton channel. CF(1) has five subunits: alpha(3), beta(3), gamma(1), delta(1), epsilon(1). CF(0) has three main subunits: a(1), b(2) and c(9-12). The alpha and beta chains form an alternating ring which encloses part of the gamma chain. CF(1) is attached to CF(0) by a central stalk formed by the gamma and epsilon chains, while a peripheral stalk is formed by the delta and b chains.

The protein localises to the cell inner membrane. In terms of biological role, key component of the proton channel; it plays a direct role in the translocation of protons across the membrane. The chain is ATP synthase subunit a from Campylobacter hominis (strain ATCC BAA-381 / DSM 21671 / CCUG 45161 / LMG 19568 / NCTC 13146 / CH001A).